Reading from the N-terminus, the 103-residue chain is PTS system lactose-specific EIIA component (103 aa).

The 102-residue stretch at 1 to 102 folds into the PTS EIIA type-3 domain; it reads MNREEVQLLG…MKHLLEFYKR (102 aa). The Tele-phosphohistidine intermediate role is filled by H78. H78 carries the phosphohistidine; by HPr modification. Residue D81 participates in Mg(2+) binding.

As to quaternary structure, homotrimer. It depends on Mg(2+) as a cofactor.

The protein resides in the cytoplasm. Functionally, the phosphoenolpyruvate-dependent sugar phosphotransferase system (sugar PTS), a major carbohydrate active transport system, catalyzes the phosphorylation of incoming sugar substrates concomitantly with their translocation across the cell membrane. The enzyme II LacEF PTS system is involved in lactose transport. The sequence is that of PTS system lactose-specific EIIA component from Staphylococcus aureus (strain COL).